Consider the following 272-residue polypeptide: Eukaryotic translation initiation factor 4E homolog (272 aa).

Residues 249-272 (GKLNSGRKPSNTRGGFSSFGNKRY) form a disordered region. Polar residues predominate over residues 255 to 272 (RKPSNTRGGFSSFGNKRY).

This sequence belongs to the eukaryotic initiation factor 4E family.

In terms of biological role, recognizes and binds the 7-methylguanosine-containing mRNA cap during an early step in the initiation of protein synthesis and facilitates ribosome binding by inducing the unwinding of the mRNAs secondary structures. The sequence is that of Eukaryotic translation initiation factor 4E homolog from Acanthamoeba polyphaga mimivirus (APMV).